The sequence spans 314 residues: Protein phosphatase PTC7 homolog fig (314 aa).

In terms of domain architecture, PPM-type phosphatase spans 43–309 (PYLVTVVQGR…DDITLILSSV (267 aa)). Residues Asp87, Gly88, and Asp232 each coordinate Mn(2+).

The protein belongs to the PP2C family. Mg(2+) is required as a cofactor. It depends on Mn(2+) as a cofactor.

The catalysed reaction is O-phospho-L-seryl-[protein] + H2O = L-seryl-[protein] + phosphate. It catalyses the reaction O-phospho-L-threonyl-[protein] + H2O = L-threonyl-[protein] + phosphate. This Drosophila simulans (Fruit fly) protein is Protein phosphatase PTC7 homolog fig.